The sequence spans 79 residues: Sulfur carrier protein TusA (79 aa).

The Cysteine persulfide intermediate role is filled by C17.

Belongs to the sulfur carrier protein TusA family.

The protein resides in the cytoplasm. In terms of biological role, sulfur carrier protein which probably makes part of a sulfur-relay system. The polypeptide is Sulfur carrier protein TusA (Pseudoalteromonas translucida (strain TAC 125)).